A 197-amino-acid polypeptide reads, in one-letter code: Probable proteasome subunit beta type-4 (197 aa).

This sequence belongs to the peptidase T1B family. As to quaternary structure, the 26S proteasome consists of a 20S proteasome core and two 19S regulatory subunits. The 20S proteasome core is composed of 28 subunits that are arranged in four stacked rings, resulting in a barrel-shaped structure. The two end rings are each formed by seven alpha subunits, and the two central rings are each formed by seven beta subunits. The catalytic chamber with the active sites is on the inside of the barrel.

It localises to the cytoplasm. Its subcellular location is the nucleus. In terms of biological role, non-catalytic component of the proteasome which degrades poly-ubiquitinated proteins in the cytoplasm and in the nucleus. It is essential for the regulated turnover of proteins and for the removal of misfolded proteins. The proteasome is a multicatalytic proteinase complex that is characterized by its ability to cleave peptides with Arg, Phe, Tyr, Leu, and Glu adjacent to the leaving group at neutral or slightly basic pH. It has an ATP-dependent proteolytic activity. The protein is Probable proteasome subunit beta type-4 (PRE1) of Encephalitozoon cuniculi (strain GB-M1) (Microsporidian parasite).